Here is a 639-residue protein sequence, read N- to C-terminus: Versicolorin B synthase stcN (639 aa).

The signal sequence occupies residues 1–19 (MPAWSLLVLSALPVVGMFA). FAD is bound by residues 77-78 (TA) and 98-99 (EA). An N-linked (GlcNAc...) asparagine glycan is attached at Asn109. 164–167 (GAML) contacts FAD. N-linked (GlcNAc...) asparagine glycosylation occurs at Asn214. The PAS domain maps to 263–301 (GFSNGQLLGRSYITHTIHPKTRRRDTASTSYLQTALRTS). Residues Asn444 and Asn501 are each glycosylated (N-linked (GlcNAc...) asparagine). FAD is bound by residues Ala609 and 620 to 621 (PM).

Belongs to the GMC oxidoreductase family. In terms of assembly, homodimer. It depends on FAD as a cofactor.

Its subcellular location is the cytoplasm. It is found in the cytosol. The enzyme catalyses (2S-3S)-versiconal hemiacetal = versicolorin B + H2O. It catalyses the reaction (S)-5'-oxoaverantin + H(+) = (1'S,5'S)-averufin + H2O. It functions in the pathway mycotoxin biosynthesis; sterigmatocystin biosynthesis. In terms of biological role, norsolorinic acid reductase; part of the gene cluster that mediates the biosynthesis of sterigmatocystin (ST), a polyketide-derived furanocoumarin which is part of the most toxic and carcinogenic compounds among the known mycotoxins. The first step in the biosynthesis of sterigmatocystin is the production of hexanoate by the fatty acid synthase (FAS) units stcJ and stcK. The polyketide backbone is assembled by the non-reducing polyketide synthase stcA by condensation of the starter hexanoyl-CoA and 7 malonyl-CoA extender units followed by cyclization and release of norsolorinic acid. Norsolorinic acid is the first stable intermediate in the biosynthesis of sterigmatocystin and is converted into averantin (AVN) by the ketoreductase stcE which reduces the hexanoate ketone to an alcohol. Averantin is then oxidized into 5'-hydroxyaverantin (HAVN) by the cytochrome P450 monooxygenase stcF. 5'-hydroxyaverantin is further converted to 5'-oxyaverantin (OAVN) by the 5'-hydroxyaverantin dehydrogenase stcG. The next step is the conversion of OAVN into averufin (AVF) which is catalyzed by a yet to be identified enzyme. The cytochrome P450 monooxygenase stcB and the flavin-binding monooxygenase stcW are both required for the conversion of averufin to 1-hydroxyversicolorone. The esterase stcI probably catalyzes the formation of versiconal hemiacetal acetate from 1-hydroxyversicolorone. The oxydoreductase stcN then probably catalyzes the biosynthetic step from versiconal to versicolorin B (VERB). The next step is performed by the versicolorin B desaturase stcL to produce versicolorin A (VERA). The ketoreductase stcU and the cytochrome P450 monooxygenase stcS are involved in the conversion of versicolorin A to demethylsterigmatocystin. The Baeyer-Villiger oxidas stcQ and the reductase stcR might be involved in the biosynthetic step from versicolorin A to demethylsterigmatocystin. The final step in the biosynthesis of sterigmatocystin is the methylation of demethylsterigmatocystin catalyzed by the methyltransferase stcP. This Emericella nidulans (strain FGSC A4 / ATCC 38163 / CBS 112.46 / NRRL 194 / M139) (Aspergillus nidulans) protein is Versicolorin B synthase stcN.